A 138-amino-acid chain; its full sequence is ATP synthase epsilon chain, chloroplastic (138 aa).

Belongs to the ATPase epsilon chain family. F-type ATPases have 2 components, CF(1) - the catalytic core - and CF(0) - the membrane proton channel. CF(1) has five subunits: alpha(3), beta(3), gamma(1), delta(1), epsilon(1). CF(0) has three main subunits: a, b and c.

Its subcellular location is the plastid. It is found in the chloroplast thylakoid membrane. In terms of biological role, produces ATP from ADP in the presence of a proton gradient across the membrane. In Galdieria sulphuraria (Red alga), this protein is ATP synthase epsilon chain, chloroplastic.